Here is a 271-residue protein sequence, read N- to C-terminus: Orotidine 5'-phosphate decarboxylase (271 aa).

K95 (proton donor) is an active-site residue.

Belongs to the OMP decarboxylase family. Type 2 subfamily.

The catalysed reaction is orotidine 5'-phosphate + H(+) = UMP + CO2. The protein operates within pyrimidine metabolism; UMP biosynthesis via de novo pathway; UMP from orotate: step 2/2. This chain is Orotidine 5'-phosphate decarboxylase, found in Janthinobacterium sp. (strain Marseille) (Minibacterium massiliensis).